The chain runs to 686 residues: CAI-1 autoinducer sensor kinase/phosphatase CqsS (686 aa).

A run of 6 helical transmembrane segments spans residues 21-41 (LVGW…EYWF), 47-64 (NLGL…LVFR), 77-97 (GYFL…MMLM), 100-120 (WSTI…LLVH), 124-144 (VMAL…YGLT), and 152-172 (IEWQ…LCFF). A Histidine kinase domain is found at 191–416 (GIAHEMRNPL…EFVLSFPRYD (226 aa)). Residue His194 is modified to Phosphohistidine; by autocatalysis. The region spanning 569-686 (RILVVDDNQS…VLLNKVAAWV (118 aa)) is the Response regulatory domain. Asp618 bears the 4-aspartylphosphate mark.

The protein resides in the cell membrane. The catalysed reaction is ATP + protein L-histidine = ADP + protein N-phospho-L-histidine.. Its function is as follows. Senses the quorum-sensing autoinducer CAI-1 ((S)-3-hydroxytridecan-4-one) which probably functions as an intragenus signal. The sensory signal is then relayed to LuxU and LuxO. In Vibrio cholerae serotype O1 (strain ATCC 39315 / El Tor Inaba N16961), this protein is CAI-1 autoinducer sensor kinase/phosphatase CqsS (cqsS).